Consider the following 269-residue polypeptide: MEMO1 family protein TV1383 (269 aa).

It belongs to the MEMO1 family.

The chain is MEMO1 family protein TV1383 from Thermoplasma volcanium (strain ATCC 51530 / DSM 4299 / JCM 9571 / NBRC 15438 / GSS1).